Consider the following 601-residue polypeptide: Ubiquilin-4 (601 aa).

One can recognise a Ubiquitin-like domain in the interval I13–K87. Residues K23 and K62 each participate in a glycyl lysine isopeptide (Lys-Gly) (interchain with G-Cter in SUMO2) cross-link. Positions K87–T155 are disordered. Low complexity predominate over residues A88–S138. A phosphoserine mark is found at S98 and S144. A compositionally biased stretch (gly residues) spans S139 to E149. 2 STI1 domains span residues N192–M229 and E230–M261. T287 bears the Phosphothreonine mark. The interval F301–F366 is disordered. Low complexity predominate over residues S307–S318. Position 318 is a phosphoserine; by ATM (S318). Residues L329 to S340 show a composition bias toward pro residues. A compositionally biased stretch (gly residues) spans G344–G354. The span at Q357–F366 shows a compositional bias: polar residues. 2 STI1 domains span residues N393–L440 and L444–L476. The interval L490–Q533 is disordered. The span at A507–Q533 shows a compositional bias: low complexity. The UBA domain maps to Q553–S598.

Homooligomer. Binds signal sequences of proteins that are targeted to the endoplasmic reticulum. Interacts (via UBA domain) with GJA1 (not ubiquitinated) and with ubiquitin; both compete for the same binding site. Interacts (via UBA domain) with ubiquitin and with polyubiquitin chains. Interacts (via ubiquitin-like domain) with PSMD2 and PSMD4, regulatory subunits of the 26S proteasome. Interacts with ATXN1/SCA1; interaction with ATXN1 inhibits polyubiquitination of UBQLN4 and interferes with PSMD4 binding. Interacts with HERPUD1. Interacts (via ubiquitin-like domain) with UBQLN1 (via UBA domain). Interacts with UBQLN2. Interacts (via STI1 1 and 2 domains) with MAP1LC3A/B/C. Interacts with BAG6. Interacts with MRE11 (when ubiquitinated); interaction with ubiquitinated MRE11 leads to MRE11 removal from chromatin. Interacts with DESI1/POST; leading to nuclear export. Interacts with BCL2A1 and BCL2L10. As to quaternary structure, (Microbial infection) Interacts with Mumps virus protein SH. Phosphorylated by ATM at Ser-318 in response to DNA damage, leading to localization in the nucleus and recruitment to sites of DNA damage. Post-translationally, ubiquitinated; this does not lead to proteasomal degradation. May undergo both 'Lys-48'- and 'Lys-63'-linked polyubiquitination. In terms of tissue distribution, highly expressed in pancreas, kidney, skeletal muscle, heart and throughout the brain, and at lower levels in placenta, lung and liver.

The protein localises to the nucleus. It localises to the cytoplasm. It is found in the chromosome. The protein resides in the endoplasmic reticulum. Its subcellular location is the perinuclear region. The protein localises to the cytoplasmic vesicle. It localises to the autophagosome. Its function is as follows. Regulator of protein degradation that mediates the proteasomal targeting of misfolded, mislocalized or accumulated proteins. Acts by binding polyubiquitin chains of target proteins via its UBA domain and by interacting with subunits of the proteasome via its ubiquitin-like domain. Key regulator of DNA repair that represses homologous recombination repair: in response to DNA damage, recruited to sites of DNA damage following phosphorylation by ATM and acts by binding and removing ubiquitinated MRE11 from damaged chromatin, leading to MRE11 degradation by the proteasome. MRE11 degradation prevents homologous recombination repair, redirecting double-strand break repair toward non-homologous end joining (NHEJ). Specifically recognizes and binds mislocalized transmembrane-containing proteins and targets them to proteasomal degradation. Collaborates with DESI1/POST in the export of ubiquitinated proteins from the nucleus to the cytoplasm. Also plays a role in the regulation of the proteasomal degradation of non-ubiquitinated GJA1. Acts as an adapter protein that recruits UBQLN1 to the autophagy machinery. Mediates the association of UBQLN1 with autophagosomes and the autophagy-related protein LC3 (MAP1LC3A/B/C) and may assist in the maturation of autophagosomes to autolysosomes by mediating autophagosome-lysosome fusion. This chain is Ubiquilin-4, found in Homo sapiens (Human).